The chain runs to 437 residues: ATP-dependent RNA helicase RhlB (437 aa).

The Q motif motif lies at 9–37 (KKFADFPLHKEVQQALNEVGFEFCTPIQA). In terms of domain architecture, Helicase ATP-binding spans 40-219 (LPILLAKKDI…YDHMNEPEKV (180 aa)). 53–60 (AQTGTGKT) is an ATP binding site. A DEAD box motif is present at residues 165–168 (DEAD). Residues 243–390 (KMPLLLSLLE…VTSYDSEALL (148 aa)) enclose the Helicase C-terminal domain. Positions 394–437 (PAPKRIHRKPSSHSRNSRDRSGSRPQGGHRGNAPRRHDKTRRHS) are disordered. Over residues 425–437 (NAPRRHDKTRRHS) the composition is skewed to basic residues.

This sequence belongs to the DEAD box helicase family. RhlB subfamily. In terms of assembly, component of the RNA degradosome, which is a multiprotein complex involved in RNA processing and mRNA degradation.

It localises to the cytoplasm. The enzyme catalyses ATP + H2O = ADP + phosphate + H(+). In terms of biological role, DEAD-box RNA helicase involved in RNA degradation. Has RNA-dependent ATPase activity and unwinds double-stranded RNA. This chain is ATP-dependent RNA helicase RhlB, found in Shewanella piezotolerans (strain WP3 / JCM 13877).